Consider the following 146-residue polypeptide: Ribonuclease H (146 aa).

Residues 1–141 (MKKVQLITDG…CDELATRAAR (141 aa)) enclose the RNase H type-1 domain. 4 residues coordinate Mg(2+): Asp-9, Glu-47, Asp-69, and Asp-133.

It belongs to the RNase H family. As to quaternary structure, monomer. It depends on Mg(2+) as a cofactor.

The protein localises to the cytoplasm. It carries out the reaction Endonucleolytic cleavage to 5'-phosphomonoester.. Functionally, endonuclease that specifically degrades the RNA of RNA-DNA hybrids. In Solibacter usitatus (strain Ellin6076), this protein is Ribonuclease H.